The sequence spans 387 residues: 3-ketoacyl-CoA thiolase (387 aa).

Cysteine 91 serves as the catalytic Acyl-thioester intermediate. Active-site proton acceptor residues include histidine 343 and cysteine 373.

Belongs to the thiolase-like superfamily. Thiolase family. In terms of assembly, heterotetramer of two alpha chains (FadB) and two beta chains (FadA).

The protein resides in the cytoplasm. It catalyses the reaction an acyl-CoA + acetyl-CoA = a 3-oxoacyl-CoA + CoA. It participates in lipid metabolism; fatty acid beta-oxidation. Its function is as follows. Catalyzes the final step of fatty acid oxidation in which acetyl-CoA is released and the CoA ester of a fatty acid two carbons shorter is formed. The polypeptide is 3-ketoacyl-CoA thiolase (Escherichia coli O1:K1 / APEC).